A 541-amino-acid chain; its full sequence is Transcription termination factor MTERF4, chloroplastic (541 aa).

A chloroplast-targeting transit peptide spans 1–45; the sequence is MKIRFCNGFTKPGFLLVHFEPPSFFAVRSRSLSDSTYGNLCNHKK. Disordered stretches follow at residues 66–103 and 503–541; these read SRSL…SLYS and EVET…EEFA. Over residues 85 to 99 the composition is skewed to basic and acidic residues; the sequence is GRDRDRDKDKGRDSK. Residues 507 to 517 show a composition bias toward polar residues; that stretch reads DPSSFDMNTLM. Residues 521 to 541 are compositionally biased toward acidic residues; that stretch reads REEESDSEYEEEEDDDDEEFA.

Belongs to the mTERF family.

The protein localises to the plastid. It localises to the chloroplast. Its subcellular location is the mitochondrion. Transcription termination factor required for processing and steady-state levels of plastid transcripts. Required for splicing of the chloroplastic Clp protease (ClpP) group IIa intron. Required for maturation of 16S rRNA and 23S rRNA in the chloroplast. Essential for embryogenesis. Required for the maintenance of the correct levels of transcripts in the mitochondria and chloroplasts. In Arabidopsis thaliana (Mouse-ear cress), this protein is Transcription termination factor MTERF4, chloroplastic.